Consider the following 662-residue polypeptide: Glycogen debranching enzyme (662 aa).

The active-site Nucleophile is Asp338. The active-site Proton donor is the Glu373.

This sequence belongs to the glycosyl hydrolase 13 family.

It catalyses the reaction Hydrolysis of (1-&gt;6)-alpha-D-glucosidic linkages to branches with degrees of polymerization of three or four glucose residues in limit dextrin.. It functions in the pathway glycan degradation; glycogen degradation. Its function is as follows. Removes maltotriose and maltotetraose chains that are attached by 1,6-alpha-linkage to the limit dextrin main chain, generating a debranched limit dextrin. In Yersinia pseudotuberculosis serotype I (strain IP32953), this protein is Glycogen debranching enzyme.